The primary structure comprises 248 residues: Transcriptional activator protein FnrL (248 aa).

Residues lysine 154–alanine 232 enclose the HTH crp-type domain. Positions arginine 191–serine 210 form a DNA-binding region, H-T-H motif.

In terms of biological role, anaerobic regulatory protein; transcriptional activator of hemA. Appears to regulate other genes. The chain is Transcriptional activator protein FnrL (fnrL) from Cereibacter sphaeroides (strain ATCC 17023 / DSM 158 / JCM 6121 / CCUG 31486 / LMG 2827 / NBRC 12203 / NCIMB 8253 / ATH 2.4.1.) (Rhodobacter sphaeroides).